The following is a 43-amino-acid chain: Iota-conotoxin-like Fi11.6 (43 aa).

4 disulfide bridges follow: Cys-2–Cys-16, Cys-9–Cys-19, Cys-15–Cys-24, and Cys-18–Cys-35. A 4-hydroxyproline modification is found at Pro-8. Residue Pro-26 is modified to 4-hydroxyproline. A 6'-bromotryptophan modification is found at Trp-30. Residue Phe-41 is modified to D-phenylalanine.

Belongs to the conotoxin I1 superfamily. Expressed by the venom duct.

It localises to the secreted. In terms of biological role, iota-conotoxins bind to voltage-gated sodium channels (Nav) and act as agonists by shifting the voltage-dependence of activation to more hyperpolarized levels. Produces general excitatory symptoms. This is Iota-conotoxin-like Fi11.6 from Conus figulinus (Fig cone).